A 209-amino-acid chain; its full sequence is Kynurenine formamidase (209 aa).

Substrate is bound at residue Trp19. The Zn(2+) site is built by His49, His53, and Asp55. Catalysis depends on His59, which acts as the Proton donor/acceptor. Positions 160 and 172 each coordinate Zn(2+).

Belongs to the Cyclase 1 superfamily. KynB family. Homodimer. The cofactor is Zn(2+).

The catalysed reaction is N-formyl-L-kynurenine + H2O = L-kynurenine + formate + H(+). Its pathway is amino-acid degradation; L-tryptophan degradation via kynurenine pathway; L-kynurenine from L-tryptophan: step 2/2. Catalyzes the hydrolysis of N-formyl-L-kynurenine to L-kynurenine, the second step in the kynurenine pathway of tryptophan degradation. This Ralstonia pickettii (strain 12J) protein is Kynurenine formamidase.